The primary structure comprises 80 residues: Putative membrane protein insertion efficiency factor (80 aa).

A disordered region spans residues 61-80; that stretch reads KTGKDPVPDHFSLKRNQEGE. Residues 62–80 show a composition bias toward basic and acidic residues; sequence TGKDPVPDHFSLKRNQEGE.

The protein belongs to the UPF0161 family.

The protein resides in the cell membrane. Could be involved in insertion of integral membrane proteins into the membrane. The chain is Putative membrane protein insertion efficiency factor from Streptococcus pneumoniae serotype 2 (strain D39 / NCTC 7466).